A 199-amino-acid chain; its full sequence is Probable nicotinate-nucleotide adenylyltransferase (199 aa).

The protein belongs to the NadD family.

The catalysed reaction is nicotinate beta-D-ribonucleotide + ATP + H(+) = deamido-NAD(+) + diphosphate. It functions in the pathway cofactor biosynthesis; NAD(+) biosynthesis; deamido-NAD(+) from nicotinate D-ribonucleotide: step 1/1. In terms of biological role, catalyzes the reversible adenylation of nicotinate mononucleotide (NaMN) to nicotinic acid adenine dinucleotide (NaAD). This Corynebacterium jeikeium (strain K411) protein is Probable nicotinate-nucleotide adenylyltransferase.